Reading from the N-terminus, the 254-residue chain is Decaprenylphosphoryl-2-keto-beta-D-erythro-pentose reductase (254 aa).

Residue Asp67 coordinates NAD(+). Tyr160 functions as the Proton acceptor in the catalytic mechanism. NAD(+) is bound at residue Lys164.

It belongs to the short-chain dehydrogenases/reductases (SDR) family. In terms of assembly, interacts with DprE1 to form an epimerase complex.

It is found in the periplasm. The enzyme catalyses trans,octa-cis-decaprenylphospho-beta-D-arabinofuranose + NAD(+) = trans,octa-cis-decaprenylphospho-beta-D-erythro-pentofuranosid-2-ulose + NADH + H(+). Its pathway is cell wall biogenesis; cell wall polysaccharide biosynthesis. In terms of biological role, component of the DprE1-DprE2 complex that catalyzes the 2-step epimerization of decaprenyl-phospho-ribose (DPR) to decaprenyl-phospho-arabinose (DPA), a key precursor that serves as the arabinose donor required for the synthesis of cell-wall arabinans. DprE1 catalyzes the first step of epimerization, namely FAD-dependent oxidation of the C2' hydroxyl of DPR to yield the keto intermediate decaprenyl-phospho-2'-keto-D-arabinose (DPX). The intermediate DPX is then transferred to DprE2 subunit of the epimerase complex, most probably through a 'substrate channel' at the interface of DprE1-DprE2 complex. DprE2 then catalyzes the second step of epimerization, the NAD(+)-dependent reduction of DPX that leads to the formation of DPA. This Mycolicibacterium smegmatis (strain ATCC 700084 / mc(2)155) (Mycobacterium smegmatis) protein is Decaprenylphosphoryl-2-keto-beta-D-erythro-pentose reductase.